The sequence spans 2512 residues: Isonitrile lipopeptide synthase (2512 aa).

2 Carrier domains span residues 935–1003 (AAGL…PTPD) and 1984–2059 (APAG…GRDA). O-(pantetheine 4'-phosphoryl)serine occurs at positions 963 and 2019. Residues 2112-2372 (LTGATGFLGR…LPVTFVAEAI (261 aa)) form the Thioester reductase (TE) domain.

The protein belongs to the ATP-dependent AMP-binding enzyme family. Pantetheine 4'-phosphate is required as a cofactor.

It carries out the reaction 2 a (3R)-3-isocyanyl-fatty acyl-[ACP] + L-lysine + ATP + 2 NADPH = an isonitrile lipopeptide + 2 holo-[ACP] + AMP + diphosphate + 2 NADP(+). In terms of biological role, nonribosomal peptide synthetase (NRPS) involved in the biosynthesis of a unique class of isonitrile lipopeptides (INLPs) that seem to function as virulence factors in M.tuberculosis and to play a role in metal acquisition. Catalyzes the final step in the pathway, i.e. the condensation of a (3R)-3-isocyanyl-fatty acyl-[ACP] to both amino groups of a lysine, producing isonitrile lipopeptides. This chain is Isonitrile lipopeptide synthase, found in Mycobacterium tuberculosis (strain ATCC 25618 / H37Rv).